The chain runs to 136 residues: Ribosome-binding factor A (136 aa).

Residues 1-22 (MNTAGPAGKLAGHAASGPTQRQ) are disordered.

This sequence belongs to the RbfA family. As to quaternary structure, monomer. Binds 30S ribosomal subunits, but not 50S ribosomal subunits or 70S ribosomes.

It localises to the cytoplasm. One of several proteins that assist in the late maturation steps of the functional core of the 30S ribosomal subunit. Associates with free 30S ribosomal subunits (but not with 30S subunits that are part of 70S ribosomes or polysomes). Required for efficient processing of 16S rRNA. May interact with the 5'-terminal helix region of 16S rRNA. In Gluconacetobacter diazotrophicus (strain ATCC 49037 / DSM 5601 / CCUG 37298 / CIP 103539 / LMG 7603 / PAl5), this protein is Ribosome-binding factor A.